Consider the following 122-residue polypeptide: Large ribosomal subunit protein uL18 (122 aa).

Over residues 1–22 (MDKNKKLQSKRLRRRRHVRNKL) the composition is skewed to basic residues. A disordered region spans residues 1-25 (MDKNKKLQSKRLRRRRHVRNKLRGS).

It belongs to the universal ribosomal protein uL18 family. In terms of assembly, part of the 50S ribosomal subunit; part of the 5S rRNA/L5/L18/L25 subcomplex. Contacts the 5S and 23S rRNAs.

Its function is as follows. This is one of the proteins that bind and probably mediate the attachment of the 5S RNA into the large ribosomal subunit, where it forms part of the central protuberance. This chain is Large ribosomal subunit protein uL18, found in Rhodopirellula baltica (strain DSM 10527 / NCIMB 13988 / SH1).